Consider the following 277-residue polypeptide: Putative phosphoenolpyruvate synthase regulatory protein (277 aa).

157-164 (GVSRSGKT) serves as a coordination point for ADP.

It belongs to the pyruvate, phosphate/water dikinase regulatory protein family. PSRP subfamily.

It catalyses the reaction [pyruvate, water dikinase] + ADP = [pyruvate, water dikinase]-phosphate + AMP + H(+). The catalysed reaction is [pyruvate, water dikinase]-phosphate + phosphate + H(+) = [pyruvate, water dikinase] + diphosphate. Its function is as follows. Bifunctional serine/threonine kinase and phosphorylase involved in the regulation of the phosphoenolpyruvate synthase (PEPS) by catalyzing its phosphorylation/dephosphorylation. This Aromatoleum aromaticum (strain DSM 19018 / LMG 30748 / EbN1) (Azoarcus sp. (strain EbN1)) protein is Putative phosphoenolpyruvate synthase regulatory protein.